Here is a 298-residue protein sequence, read N- to C-terminus: DNA repair protein RecO (298 aa).

Belongs to the RecO family.

In terms of biological role, involved in DNA repair and RecF pathway recombination. This is DNA repair protein RecO from Cupriavidus metallidurans (strain ATCC 43123 / DSM 2839 / NBRC 102507 / CH34) (Ralstonia metallidurans).